A 94-amino-acid chain; its full sequence is Small ribosomal subunit protein uS19c (94 aa).

This sequence belongs to the universal ribosomal protein uS19 family.

The protein localises to the plastid. The protein resides in the chloroplast. In terms of biological role, protein S19 forms a complex with S13 that binds strongly to the 16S ribosomal RNA. The protein is Small ribosomal subunit protein uS19c (rps19) of Euglena gracilis.